We begin with the raw amino-acid sequence, 394 residues long: HORMA domain-containing protein 1 (394 aa).

In terms of domain architecture, HORMA spans 24 to 226; sequence HQSLVLVKRL…TPFHIFKVKV (203 aa). Residues 253–282 are compositionally biased toward basic and acidic residues; sequence ILRDKDVEDEQEHYTSDDLDIETKMEEQEK. A disordered region spans residues 253–394; that stretch reads ILRDKDVEDE…RKFSEPKEHI (142 aa). Over residues 288–300 the composition is skewed to acidic residues; sequence ELEEPSLVCEEDE. Polar residues-rich tracts occupy residues 310–324 and 343–352; these read LSIS…VNKT and KMANGNQPVK. A compositionally biased stretch (basic and acidic residues) spans 362-374; that stretch reads QHESGRIVLHHFD. Serine 376 is subject to Phosphoserine. A Nuclear localization signal motif is present at residues 383–386; it reads KRRK.

In terms of assembly, interacts with HORMAD2. Interacts with IHO1. Post-translationally, phosphorylated at Ser-377 in a SPO11-dependent manner. In terms of tissue distribution, testis-specific. Over-expressed in carcinomas.

It localises to the nucleus. The protein localises to the chromosome. Plays a key role in meiotic progression. Regulates 3 different functions during meiosis: ensures that sufficient numbers of processed DNA double-strand breaks (DSBs) are available for successful homology search by increasing the steady-state numbers of single-stranded DSB ends. Promotes synaptonemal-complex formation independently of its role in homology search. Plays a key role in the male mid-pachytene checkpoint and the female meiotic prophase checkpoint: required for efficient build-up of ATR activity on unsynapsed chromosome regions, a process believed to form the basis of meiotic silencing of unsynapsed chromatin (MSUC) and meiotic prophase quality control in both sexes. The protein is HORMA domain-containing protein 1 of Homo sapiens (Human).